A 564-amino-acid chain; its full sequence is Sulfite reductase [NADPH] hemoprotein beta-component 1 (564 aa).

Positions 426, 432, 471, and 475 each coordinate [4Fe-4S] cluster. Position 475 (cysteine 475) interacts with siroheme.

This sequence belongs to the nitrite and sulfite reductase 4Fe-4S domain family. As to quaternary structure, alpha(8)-beta(8). The alpha component is a flavoprotein, the beta component is a hemoprotein. Siroheme serves as cofactor. It depends on [4Fe-4S] cluster as a cofactor.

The enzyme catalyses hydrogen sulfide + 3 NADP(+) + 3 H2O = sulfite + 3 NADPH + 4 H(+). It participates in sulfur metabolism; hydrogen sulfide biosynthesis; hydrogen sulfide from sulfite (NADPH route): step 1/1. In terms of biological role, component of the sulfite reductase complex that catalyzes the 6-electron reduction of sulfite to sulfide. This is one of several activities required for the biosynthesis of L-cysteine from sulfate. The polypeptide is Sulfite reductase [NADPH] hemoprotein beta-component 1 (Pectobacterium carotovorum subsp. carotovorum (strain PC1)).